A 1161-amino-acid chain; its full sequence is PAN2-PAN3 deadenylation complex catalytic subunit pan2 (1161 aa).

WD repeat units lie at residues 20 to 59 and 276 to 315; these read GLPT…RYTS and ANVS…HFNE. Residues 316–452 form a linker region; that stretch reads MSKEVEFADV…GAKLNGEAED (137 aa). A USP domain is found at 453–822; the sequence is DPLLKYSNVE…SPCILAYQAK (370 aa). The region spanning 871-1049 is the Exonuclease domain; the sequence is VALDTEFVDL…IEDARMALRL (179 aa). Asp874, Glu876, Asp983, and Asp1042 together coordinate a divalent metal cation. One copy of the WD 4 repeat lies at 1009–1060; the sequence is NRRLSLRYLAWAVFKEYIQEEPADNNQGHDSIEDARMALRLWKKFQEYEDAG. The segment at 1092-1161 is disordered; that stretch reads RPGTAVTMQN…GDFFGGSPLK (70 aa). A compositionally biased stretch (polar residues) spans 1097-1110; sequence VTMQNSSGRNTPST. A compositionally biased stretch (low complexity) spans 1116-1129; that stretch reads AATATATTSAPATP. Residues 1145–1155 are compositionally biased toward gly residues; the sequence is TFGGPGAGDFF.

Belongs to the peptidase C19 family. PAN2 subfamily. Forms a heterotrimer with an asymmetric homodimer of the regulatory subunit pan3 to form the poly(A)-nuclease (PAN) deadenylation complex. A divalent metal cation is required as a cofactor.

Its subcellular location is the cytoplasm. It catalyses the reaction Exonucleolytic cleavage of poly(A) to 5'-AMP.. Positively regulated by the regulatory subunit pan3. In terms of biological role, catalytic subunit of the poly(A)-nuclease (PAN) deadenylation complex, one of two cytoplasmic mRNA deadenylases involved in mRNA turnover. PAN specifically shortens poly(A) tails of RNA and the activity is stimulated by poly(A)-binding protein pab1. PAN deadenylation is followed by rapid degradation of the shortened mRNA tails by the CCR4-NOT complex. Deadenylated mRNAs are then degraded by two alternative mechanisms, namely exosome-mediated 3'-5' exonucleolytic degradation, or deadenylation-dependent mRNA decaping and subsequent 5'-3' exonucleolytic degradation by xrn1. May also be involved in post-transcriptional maturation of mRNA poly(A) tails. This chain is PAN2-PAN3 deadenylation complex catalytic subunit pan2, found in Neosartorya fischeri (strain ATCC 1020 / DSM 3700 / CBS 544.65 / FGSC A1164 / JCM 1740 / NRRL 181 / WB 181) (Aspergillus fischerianus).